The primary structure comprises 706 residues: UvrABC system protein C (706 aa).

One can recognise a GIY-YIG domain in the interval 16-95 (VEPGVYRFRD…IKEFDPRFNV (80 aa)). In terms of domain architecture, UVR spans 208–243 (DRLAKDMEQQMTAAAEQLDFERAARLRDDISALKRA). A disordered region spans residues 651–706 (APQNGTAPDPAPGTGDPQTPADPHSAATAADIEDDRHATGATGPQMNGSEQQVDRV). The segment covering 692–706 (TGPQMNGSEQQVDRV) has biased composition (polar residues).

Belongs to the UvrC family. As to quaternary structure, interacts with UvrB in an incision complex.

The protein resides in the cytoplasm. Functionally, the UvrABC repair system catalyzes the recognition and processing of DNA lesions. UvrC both incises the 5' and 3' sides of the lesion. The N-terminal half is responsible for the 3' incision and the C-terminal half is responsible for the 5' incision. This Mycolicibacterium smegmatis (strain ATCC 700084 / mc(2)155) (Mycobacterium smegmatis) protein is UvrABC system protein C.